The primary structure comprises 671 residues: UvrABC system protein B (671 aa).

One can recognise a Helicase ATP-binding domain in the interval 26–414 (EGLENGLAHQ…GGDIIEQVVR (389 aa)). Residue 39–46 (GVTGSGKT) coordinates ATP. A Beta-hairpin motif is present at residues 92–115 (YYDYYQPEAYVPSSDTFIEKDASV). Positions 431–593 (QVDDLLSEIR…IIPQGLNKKI (163 aa)) constitute a Helicase C-terminal domain. A UVR domain is found at 631–666 (DQKIRELEAKMYTYAQNLEFEQAAELRDQVHQLRQQ).

The protein belongs to the UvrB family. As to quaternary structure, forms a heterotetramer with UvrA during the search for lesions. Interacts with UvrC in an incision complex.

It is found in the cytoplasm. In terms of biological role, the UvrABC repair system catalyzes the recognition and processing of DNA lesions. A damage recognition complex composed of 2 UvrA and 2 UvrB subunits scans DNA for abnormalities. Upon binding of the UvrA(2)B(2) complex to a putative damaged site, the DNA wraps around one UvrB monomer. DNA wrap is dependent on ATP binding by UvrB and probably causes local melting of the DNA helix, facilitating insertion of UvrB beta-hairpin between the DNA strands. Then UvrB probes one DNA strand for the presence of a lesion. If a lesion is found the UvrA subunits dissociate and the UvrB-DNA preincision complex is formed. This complex is subsequently bound by UvrC and the second UvrB is released. If no lesion is found, the DNA wraps around the other UvrB subunit that will check the other stand for damage. The sequence is that of UvrABC system protein B from Yersinia pestis.